Reading from the N-terminus, the 430-residue chain is Adenylosuccinate synthetase (430 aa).

GTP contacts are provided by residues 12–18 (GDEGKGK) and 40–42 (GHT). Asp13 functions as the Proton acceptor in the catalytic mechanism. Mg(2+) is bound by residues Asp13 and Gly40. IMP-binding positions include 13 to 16 (DEGK), 38 to 41 (NAGH), Thr128, Arg142, Gln223, Thr238, and Arg302. His41 serves as the catalytic Proton donor. 298–304 (TTTGRPR) contributes to the substrate binding site. Residues Arg304, 330 to 332 (SID), and 413 to 415 (SVG) each bind GTP.

Belongs to the adenylosuccinate synthetase family. In terms of assembly, homodimer. It depends on Mg(2+) as a cofactor.

It is found in the cytoplasm. It carries out the reaction IMP + L-aspartate + GTP = N(6)-(1,2-dicarboxyethyl)-AMP + GDP + phosphate + 2 H(+). Its pathway is purine metabolism; AMP biosynthesis via de novo pathway; AMP from IMP: step 1/2. In terms of biological role, plays an important role in the de novo pathway of purine nucleotide biosynthesis. Catalyzes the first committed step in the biosynthesis of AMP from IMP. The polypeptide is Adenylosuccinate synthetase (Lactococcus lactis subsp. lactis (strain IL1403) (Streptococcus lactis)).